The primary structure comprises 597 residues: Elongation factor 4 (597 aa).

The tr-type G domain maps to 2–184; that stretch reads KNIRNFSIIA…EIVAKIPAPT (183 aa). Residues 14–19 and 131–134 contribute to the GTP site; these read DHGKST and NKID.

Belongs to the TRAFAC class translation factor GTPase superfamily. Classic translation factor GTPase family. LepA subfamily.

The protein localises to the cell inner membrane. It catalyses the reaction GTP + H2O = GDP + phosphate + H(+). Its function is as follows. Required for accurate and efficient protein synthesis under certain stress conditions. May act as a fidelity factor of the translation reaction, by catalyzing a one-codon backward translocation of tRNAs on improperly translocated ribosomes. Back-translocation proceeds from a post-translocation (POST) complex to a pre-translocation (PRE) complex, thus giving elongation factor G a second chance to translocate the tRNAs correctly. Binds to ribosomes in a GTP-dependent manner. This is Elongation factor 4 from Neisseria gonorrhoeae (strain ATCC 700825 / FA 1090).